Consider the following 297-residue polypeptide: MQIKIKSKEKYLIGVSGGSDSMFLLNKYKNQDVIVAHINYNLRPEAIFETLLVSKFCQKYNLELKILSFDSFKIKKNLQSGLRLGRYQFFEKIYKEFNCTKLLVGHHRDDFLETVFLQKKQKKIVTFWGIHKKNNLFNMEILRPFLYWRTKKQIIRICQQKKIPYLDDQSNFTGKYQRNQIRFLLEKKSDFSLFFLFLFYYLINIFKLIILKNQKKILQNWQKTGYNINFFKKIKIKSKIIFLFVNQNFDNVKLTRGKINEIINFICGKSTSGAFLLKKNNYIIKKKWKILPKSSKI.

ATP is bound at residue 16–21 (SGGSDS).

This sequence belongs to the tRNA(Ile)-lysidine synthase family.

It localises to the cytoplasm. It carries out the reaction cytidine(34) in tRNA(Ile2) + L-lysine + ATP = lysidine(34) in tRNA(Ile2) + AMP + diphosphate + H(+). Functionally, ligates lysine onto the cytidine present at position 34 of the AUA codon-specific tRNA(Ile) that contains the anticodon CAU, in an ATP-dependent manner. Cytidine is converted to lysidine, thus changing the amino acid specificity of the tRNA from methionine to isoleucine. This is tRNA(Ile)-lysidine synthase from Mesomycoplasma hyopneumoniae (strain 232) (Mycoplasma hyopneumoniae).